The sequence spans 143 residues: Transcriptional regulator MraZ (143 aa).

2 consecutive SpoVT-AbrB domains span residues 5–47 (TFTP…PKAE) and 76–119 (ADEQ…DAES).

The protein belongs to the MraZ family. Forms oligomers.

The protein resides in the cytoplasm. The protein localises to the nucleoid. This is Transcriptional regulator MraZ from Corynebacterium jeikeium (strain K411).